Reading from the N-terminus, the 327-residue chain is CREB homolog crh-1 (327 aa).

In terms of domain architecture, KID spans 16–75 (SPLMMLLFKALQEGGDSEDEARRRREQLNRRPSYRMILKDLETADKVMKKEPEETPPSSV). 2 disordered regions span residues 27-114 (QEGG…SPYG) and 151-200 (KVFP…VQSL). Residues 35–44 (EARRRREQLN) show a composition bias toward basic and acidic residues. The residue at position 48 (Ser-48) is a Phosphoserine. The segment covering 52-68 (ILKDLETADKVMKKEPE) has biased composition (basic and acidic residues). Positions 71–84 (PPSSVDASPLQFQS) are enriched in polar residues. Gly residues predominate over residues 161–172 (GLGGGGGGGGVP). A compositionally biased stretch (low complexity) spans 173–199 (GPSSGIAGMSVQPPTSSTPSQQQSVQS). The 52-residue stretch at 266–317 (NRKRQVRLLKNREAAKECRRKKKEYVKCLENRVSVLENQNKALIEELKTLKE) folds into the bZIP domain. The tract at residues 267-292 (RKRQVRLLKNREAAKECRRKKKEYVK) is basic motif. The stretch at 284–318 (RRKKKEYVKCLENRVSVLENQNKALIEELKTLKEL) forms a coiled coil. The segment at 294–315 (LENRVSVLENQNKALIEELKTL) is leucine-zipper.

The protein belongs to the bZIP family. As to quaternary structure, interacts with CREB-regulated transcription coactivator homolog crtc-1. Transcriptional activity is enhanced by phosphorylation. Phosphorylated by cmk-1. In terms of tissue distribution, expressed widely, including in head neurons AFD, gustatory neurons ASE, the olfactory neurons AWC, and in the ASI sensory neurons, as well as in the intestine and gonads in hermaphrodites.

It is found in the nucleus. Transcription factor. Transcriptional activity probably positively regulated by phosphorylation. Modulates expression of target genes, acting by binding to regulatory cAMP response elements (CRE). Acts downstream of the calcium-triggered CaMKK-CaMK1 signaling cascade, consisting of the protein kinase kinase ckk-1 and the protein kinase cmk-1. Plays a role in learning and memory, feeding behavior, stress response, entry into the dauer stage and modulation of lifespan. Involved in commitment to the developmentally arrested larval state known as dauer, acting by positively regulating the expression of dauer-inhibiting TGF-beta-like daf-7 in the ASI neurons. Plays a role in both associative and non-associative long-term memory (LTM). Involved in modulating feeding behavior, acting by regulating transcription of tryptophan hydroxylase tph-1 in serotonergic ADF neurons. Regulates transcription of genes involved in endoplasmic reticulum (ER) stress. Involved in modulation of lifespan, in response to raised temperature, but independently of the heat-shock response pathway, acting by regulating transcription of FMRFamide-like neuropeptides flp-6 in the AFD neuron. Functionally, plays a role in associative long-term memory (LTM) and learning. In terms of biological role, plays a role in associative long-term memory (LTM) and learning; perhaps required at the time of acquisition and/or the consolidation phase of memory formation. In Caenorhabditis elegans, this protein is CREB homolog crh-1.